We begin with the raw amino-acid sequence, 400 residues long: Eukaryotic translation initiation factor 3 subunit M (400 aa).

One can recognise a PCI domain in the interval 180–354; it reads LIAKIYSALV…QSFAVHRAQK (175 aa).

It belongs to the eIF-3 subunit M family. As to quaternary structure, component of the eukaryotic translation initiation factor 3 (eIF-3) complex.

The protein resides in the cytoplasm. In terms of biological role, component of the eukaryotic translation initiation factor 3 (eIF-3) complex, which is involved in protein synthesis of a specialized repertoire of mRNAs and, together with other initiation factors, stimulates binding of mRNA and methionyl-tRNAi to the 40S ribosome. The eIF-3 complex specifically targets and initiates translation of a subset of mRNAs involved in cell proliferation. The protein is Eukaryotic translation initiation factor 3 subunit M of Yarrowia lipolytica (strain CLIB 122 / E 150) (Yeast).